The sequence spans 247 residues: UDP-2,3-diacylglucosamine hydrolase (247 aa).

Mn(2+) is bound by residues Asp8, His10, Asp41, Asn79, and His114. A substrate-binding site is contributed by 79–80; the sequence is NR. Substrate is bound by residues Asp122, Ser160, Asp171, Gln174, and His202. Mn(2+) contacts are provided by His202 and His204.

Belongs to the LpxH family. The cofactor is Mn(2+).

The protein localises to the cell inner membrane. The catalysed reaction is UDP-2-N,3-O-bis[(3R)-3-hydroxytetradecanoyl]-alpha-D-glucosamine + H2O = 2-N,3-O-bis[(3R)-3-hydroxytetradecanoyl]-alpha-D-glucosaminyl 1-phosphate + UMP + 2 H(+). Its pathway is glycolipid biosynthesis; lipid IV(A) biosynthesis; lipid IV(A) from (3R)-3-hydroxytetradecanoyl-[acyl-carrier-protein] and UDP-N-acetyl-alpha-D-glucosamine: step 4/6. Hydrolyzes the pyrophosphate bond of UDP-2,3-diacylglucosamine to yield 2,3-diacylglucosamine 1-phosphate (lipid X) and UMP by catalyzing the attack of water at the alpha-P atom. Involved in the biosynthesis of lipid A, a phosphorylated glycolipid that anchors the lipopolysaccharide to the outer membrane of the cell. The sequence is that of UDP-2,3-diacylglucosamine hydrolase from Xanthomonas campestris pv. campestris (strain B100).